The following is a 527-amino-acid chain: MNLTNFPWLTAIILFPIVAALLVPIIPDKDGKTVRWFALTVGLIDFALIIYAFYSSYDFANPNLQLVESYQWLPEIDLRWSLGADGLSMPLIILTGFITTLAILAAWPVTFKPKLFYFLMLLMYGGQIAVFAVQDLLLFFLVWELELVPVYLILSIWGGKRRLYAATKFILYTAGGSLFILVAALTMAFYGDTVSFDMVTIAGKDFPLKLQLFLYAGFLIAYGVKLPIFPLHTWLPDAHGEATAPAHMLLAGILLKMGGYALLRMNMGMLPDAHAVFAPVLVILGVVNIIYAALTSFAQRNLKRKIAYSSISHMGFVLIGMASFTDIGTSGAMLQMISHGLIGASLFFMVGCTYDRTHTLMLDEMGGVGKKMKKVFAMWTTCSLASLALPGMSGFVAELMVFIGFATSDAYSPTFRVIIVFLAAIGVILTPIYLLSMLREILYGPENKELEEHHALVDAEPREVFIIASLLVPIIGIGLYPKVATTIYDATTNKLTALVRNSVPSLVQQAKAKTPSFSLYSLKAPEI.

The next 13 helical transmembrane spans lie at 6 to 26 (FPWL…VPII), 36 to 56 (WFAL…FYSS), 91 to 111 (LIIL…PVTF), 113 to 133 (PKLF…VFAV), 136 to 156 (LLLF…ILSI), 169 to 189 (FILY…TMAF), 212 to 232 (LFLY…FPLH), 243 to 263 (TAPA…YALL), 275 to 295 (AVFA…AALT), 306 to 326 (IAYS…SFTD), 331 to 351 (GAML…FMVG), 387 to 407 (LALP…GFAT), and 417 to 437 (VIIV…LLSM).

It belongs to the complex I subunit 4 family.

The protein resides in the cellular thylakoid membrane. It catalyses the reaction a plastoquinone + NADH + (n+1) H(+)(in) = a plastoquinol + NAD(+) + n H(+)(out). The catalysed reaction is a plastoquinone + NADPH + (n+1) H(+)(in) = a plastoquinol + NADP(+) + n H(+)(out). NDH-1 shuttles electrons from NAD(P)H, via FMN and iron-sulfur (Fe-S) centers, to quinones in the respiratory chain. The immediate electron acceptor for the enzyme in this species is believed to be plastoquinone. Couples the redox reaction to proton translocation (for every two electrons transferred, four hydrogen ions are translocated across the cytoplasmic membrane), and thus conserves the redox energy in a proton gradient. The protein is NAD(P)H-quinone oxidoreductase chain 4 1 of Microcystis aeruginosa (strain NIES-843 / IAM M-2473).